Reading from the N-terminus, the 935-residue chain is Phosphoenolpyruvate carboxylase (935 aa).

Catalysis depends on residues histidine 161 and lysine 593.

Belongs to the PEPCase type 1 family. It depends on Mg(2+) as a cofactor.

The catalysed reaction is oxaloacetate + phosphate = phosphoenolpyruvate + hydrogencarbonate. Functionally, forms oxaloacetate, a four-carbon dicarboxylic acid source for the tricarboxylic acid cycle. The chain is Phosphoenolpyruvate carboxylase from Mycobacterium avium (strain 104).